A 606-amino-acid chain; its full sequence is Thrombospondin-related anonymous protein (606 aa).

Residues 1–24 form the signal peptide; that stretch reads MKLLGNSKYFFVVLLLCISVFLNG. One can recognise a VWFA domain in the interval 43-228; that stretch reads DLHILLDGSG…TMIKPFLSKV (186 aa). The TSP type-1 domain occupies 235–281; sequence VALCGKWEEWSECSTTCDNGTKIRKRKVLHPNCAGEMTAPCKVRDCP. The tract at residues 301–541 is disordered; it reads PVEPIEPAEP…SKKQSKSNNG (241 aa). 3 stretches are compositionally biased toward low complexity: residues 409–425, 440–450, and 459–479; these read ENPFIIPDEPIEPIIAP, ELPNNLPESPS, and PNDNGDNSNNTINSNKNIPNK. Composition is skewed to basic and acidic residues over residues 487 to 504 and 516 to 532; these read NPYKGQEERIPKPHRSND and DKLEPEIPSKDYEENKS. The chain crosses the membrane as a helical span at residues 544–564; it reads IAGGIIGGLAIIGCIGVGYNF.

In terms of assembly, interacts (via integrin-like A-domain) with Anopheles gambiae saglin/SG1F; the interaction probably promotes sporozoite invasion of salivary gland. Interacts (via integrin-like A-domain) with human AHSG; the interaction promotes sporozoite invasion of hepatocytes and formation of exoerythrocytic forms of parasites in human hepatoma HepG2 cells.

It is found in the cell membrane. Its subcellular location is the cytoplasm. In terms of biological role, promotes parasite ability to invade host hepatocytes. Promotes parasite ability to invade mosquito salivary glands. Required for sporozoite gliding motility. The protein is Thrombospondin-related anonymous protein of Plasmodium berghei (strain Anka).